The primary structure comprises 147 residues: Cytochrome c-type biogenesis protein CcmE (147 aa).

Over 1–9 (MKSLKKKRR) the chain is Cytoplasmic. Residues 10–30 (IQILVAAAVALVLAVGLIGYG) traverse the membrane as a helical; Signal-anchor for type II membrane protein segment. At 31–147 (FRDGINLYRS…EQGVYQEPNS (117 aa)) the chain is on the periplasmic side. Residues H123 and Y127 each contribute to the heme site.

This sequence belongs to the CcmE/CycJ family.

The protein resides in the cell inner membrane. In terms of biological role, heme chaperone required for the biogenesis of c-type cytochromes. Transiently binds heme delivered by CcmC and transfers the heme to apo-cytochromes in a process facilitated by CcmF and CcmH. The protein is Cytochrome c-type biogenesis protein CcmE of Paracoccus denitrificans (strain Pd 1222).